We begin with the raw amino-acid sequence, 240 residues long: 1-(5-phosphoribosyl)-5-[(5-phosphoribosylamino)methylideneamino] imidazole-4-carboxamide isomerase (240 aa).

Aspartate 8 (proton acceptor) is an active-site residue. The active-site Proton donor is aspartate 129.

The protein belongs to the HisA/HisF family.

The protein localises to the cytoplasm. It catalyses the reaction 1-(5-phospho-beta-D-ribosyl)-5-[(5-phospho-beta-D-ribosylamino)methylideneamino]imidazole-4-carboxamide = 5-[(5-phospho-1-deoxy-D-ribulos-1-ylimino)methylamino]-1-(5-phospho-beta-D-ribosyl)imidazole-4-carboxamide. The protein operates within amino-acid biosynthesis; L-histidine biosynthesis; L-histidine from 5-phospho-alpha-D-ribose 1-diphosphate: step 4/9. This is 1-(5-phosphoribosyl)-5-[(5-phosphoribosylamino)methylideneamino] imidazole-4-carboxamide isomerase from Dinoroseobacter shibae (strain DSM 16493 / NCIMB 14021 / DFL 12).